We begin with the raw amino-acid sequence, 158 residues long: Transcription elongation factor GreA (158 aa).

Positions 53–73 form a coiled coil; it reads EQQGFIEGRIKEIEAKLSNAQ.

This sequence belongs to the GreA/GreB family.

Necessary for efficient RNA polymerase transcription elongation past template-encoded arresting sites. The arresting sites in DNA have the property of trapping a certain fraction of elongating RNA polymerases that pass through, resulting in locked ternary complexes. Cleavage of the nascent transcript by cleavage factors such as GreA or GreB allows the resumption of elongation from the new 3'terminus. GreA releases sequences of 2 to 3 nucleotides. The protein is Transcription elongation factor GreA of Thioalkalivibrio sulfidiphilus (strain HL-EbGR7).